We begin with the raw amino-acid sequence, 500 residues long: DNA double-strand break repair helicase HerA (500 aa).

Residues R142, 151–156 (GSGKSN), and 459–460 (KI) contribute to the ATP site.

The protein belongs to the HerA family. As to quaternary structure, homohexamer. Forms a complex with NurA.

It carries out the reaction Couples ATP hydrolysis with the unwinding of duplex DNA at the replication fork by translocating in the 5'-3' direction. This creates two antiparallel DNA single strands (ssDNA). The leading ssDNA polymer is the template for DNA polymerase III holoenzyme which synthesizes a continuous strand.. The enzyme catalyses ATP + H2O = ADP + phosphate + H(+). The catalysed reaction is Couples ATP hydrolysis with the unwinding of duplex DNA by translocating in the 3'-5' direction.. ATPase activity is stimulated in the presence of linear double-stranded (ds)DNA. Helicase activity requires the presence of NurA. LhrC-Core (Hel112) inhibits the exonuclease activity of the HerA-NurA complex on ss- and dsDNA, has no effect on the nicking activity of NurA. Its function is as follows. Involved in DNA double-strand break (DSB) repair. Probably acts with NurA to stimulate resection of the 5' strand and produce the long 3' single-strand that is required for RadA loading. NurA and HerA together stimulate the end-resection of six nucleotides of a linear DNA substrate. Has DNA-dependent ATPase activity and bidirectional DNA helicase activity. Preferentially binds single stranded (ss)DNA, bubble and semiforked DNA substrate over other DNA molecules tested. Stimulates the exo- but not endonuclease activity of NurA. The polypeptide is DNA double-strand break repair helicase HerA (Saccharolobus solfataricus (strain ATCC 35092 / DSM 1617 / JCM 11322 / P2) (Sulfolobus solfataricus)).